Here is a 398-residue protein sequence, read N- to C-terminus: Proteasome-activating nucleotidase (398 aa).

Residues 3-60 (DSEIQYLLEKLKKLEEDYYKLRELYRRLEDEKKFIESERIRYEREVRRLRSEVERLRS) adopt a coiled-coil conformation. Residues 185–190 (GTGKTL) and histidine 324 contribute to the ATP site. Residues 396-398 (MFV) are docks into pockets in the proteasome alpha-ring to cause gate opening.

Belongs to the AAA ATPase family. Homohexamer. The hexameric complex has a two-ring architecture resembling a top hat that caps the 20S proteasome core at one or both ends. Upon ATP-binding, the C-terminus of PAN interacts with the alpha-rings of the proteasome core by binding to the intersubunit pockets.

It is found in the cytoplasm. ATPase which is responsible for recognizing, binding, unfolding and translocation of substrate proteins into the archaeal 20S proteasome core particle. Is essential for opening the gate of the 20S proteasome via an interaction with its C-terminus, thereby allowing substrate entry and access to the site of proteolysis. Thus, the C-termini of the proteasomal ATPase function like a 'key in a lock' to induce gate opening and therefore regulate proteolysis. Unfolding activity requires energy from ATP hydrolysis, whereas ATP binding alone promotes ATPase-20S proteasome association which triggers gate opening, and supports translocation of unfolded substrates. This chain is Proteasome-activating nucleotidase, found in Archaeoglobus fulgidus (strain ATCC 49558 / DSM 4304 / JCM 9628 / NBRC 100126 / VC-16).